A 119-amino-acid chain; its full sequence is Ribonuclease P protein component (119 aa).

Belongs to the RnpA family. In terms of assembly, consists of a catalytic RNA component (M1 or rnpB) and a protein subunit.

It carries out the reaction Endonucleolytic cleavage of RNA, removing 5'-extranucleotides from tRNA precursor.. In terms of biological role, RNaseP catalyzes the removal of the 5'-leader sequence from pre-tRNA to produce the mature 5'-terminus. It can also cleave other RNA substrates such as 4.5S RNA. The protein component plays an auxiliary but essential role in vivo by binding to the 5'-leader sequence and broadening the substrate specificity of the ribozyme. The chain is Ribonuclease P protein component from Photorhabdus laumondii subsp. laumondii (strain DSM 15139 / CIP 105565 / TT01) (Photorhabdus luminescens subsp. laumondii).